Reading from the N-terminus, the 600-residue chain is Pyranose dehydrogenase 2 (600 aa).

Positions 1-25 are cleaved as a signal peptide; that stretch reads MLSRVAKLNSRLVSLALLGSQIAFG. Asn-99 and Asn-114 each carry an N-linked (GlcNAc...) asparagine glycan. His-127 is modified (tele-8alpha-FAD histidine). 3 N-linked (GlcNAc...) asparagine glycosylation sites follow: Asn-199, Asn-275, and Asn-342. Residue His-535 is the Proton acceptor of the active site. His-579 is an active-site residue.

Belongs to the GMC oxidoreductase family. In terms of assembly, monomer. FAD is required as a cofactor. In terms of processing, N-glycosylated.

The protein localises to the secreted. The enzyme catalyses pyranose + acceptor = pyranos-2-ulose + reduced acceptor.. It catalyses the reaction pyranose + acceptor = pyranos-3-ulose + reduced acceptor.. It carries out the reaction pyranose + acceptor = pyranos-2,3-diulose + reduced acceptor.. The catalysed reaction is a pyranoside + acceptor = a pyranosid-3-ulose + reduced acceptor.. The enzyme catalyses a pyranoside + acceptor = a pyranosid-3,4-diulose + reduced acceptor.. Functionally, catalyzes the single-oxidation or sequential double oxidation reaction of carbohydrates primarily at carbon-2 and/or carbon-3 with the concomitant reduction of the flavin. The enzyme exhibits a broad sugar substrate specificity, oxidizing different aldopyranoses to the corresponding C-1, C-2, C-3 or C-1,2, C-2,3 and C-3,4 (di)dehydro sugars with substrate-specific regioselectivity. Accepts only a narrow range of electron acceptors such as substituted benzoquinones and complexed metal ions and reacts extremely slowly with O(2) as acceptor. May play a role in the natural recycling of plant matter by oxidizing all major monosaccharides in lignocellulose and by reducing quinone compounds or reactive radical species generated during lignin depolymerization. The chain is Pyranose dehydrogenase 2 from Leucoagaricus meleagris (Western flat-topped agaric).